We begin with the raw amino-acid sequence, 176 residues long: MDSQVRQNYHRDCEAAVNRMINMELFASYSYTSMAFYFSRDDVALPGFAHFFKENSEEEREHADKLLTFQNSRGGRIFLQDIKKPERDEWGSGLDALQSSLQLEKNVNQALLDLHKIASDHTDPHMCDFLETHYLNEQVESIKKLGDFITNLSRMDAVKNKMAEYLFDKHTMGGKN.

The 150-residue stretch at 7–156 (QNYHRDCEAA…DFITNLSRMD (150 aa)) folds into the Ferritin-like diiron domain. Glu24, Glu59, His62, Glu104, and Gln138 together coordinate Fe cation.

It belongs to the ferritin family. In terms of assembly, in liver, forms a heteromer consisting of middle and heavy subunits. In spleen, forms a homomer. The functional molecule forms a roughly spherical shell with a diameter of 12 nm and contains a central cavity into which the insoluble mineral iron core is deposited. Liver and spleen (at protein level).

The enzyme catalyses 4 Fe(2+) + O2 + 4 H(+) = 4 Fe(3+) + 2 H2O. Stores iron in a soluble, non-toxic, readily available form. Important for iron homeostasis. Has ferroxidase activity. Iron is taken up in the ferrous form and deposited as ferric hydroxides after oxidation. The chain is Ferritin, middle subunit from Trematomus newnesi (Dusky notothen).